The sequence spans 256 residues: ATP synthase peripheral stalk subunit b, mitochondrial (256 aa).

A mitochondrion-targeting transit peptide spans Met-1–Ala-42. At Lys-131 the chain carries N6-succinyllysine. N6-acetyllysine is present on residues Lys-139, Lys-154, Lys-162, Lys-221, Lys-233, and Lys-244.

The protein belongs to the eukaryotic ATPase B chain family. As to quaternary structure, component of the ATP synthase complex composed at least of ATP5F1A/subunit alpha, ATP5F1B/subunit beta, ATP5MC1/subunit c (homooctomer), MT-ATP6/subunit a, MT-ATP8/subunit 8, ATP5ME/subunit e, ATP5MF/subunit f, ATP5MG/subunit g, ATP5MK/subunit k, ATP5MJ/subunit j, ATP5F1C/subunit gamma, ATP5F1D/subunit delta, ATP5F1E/subunit epsilon, ATP5PF/subunit F6, ATP5PB/subunit b, ATP5PD/subunit d, ATP5PO/subunit OSCP. ATP synthase complex consists of a soluble F(1) head domain (subunits alpha(3) and beta(3)) - the catalytic core - and a membrane F(0) domain - the membrane proton channel (subunits c, a, 8, e, f, g, k and j). These two domains are linked by a central stalk (subunits gamma, delta, and epsilon) rotating inside the F1 region and a stationary peripheral stalk (subunits F6, b, d, and OSCP).

The protein localises to the mitochondrion. It localises to the mitochondrion inner membrane. Functionally, subunit b, of the mitochondrial membrane ATP synthase complex (F(1)F(0) ATP synthase or Complex V) that produces ATP from ADP in the presence of a proton gradient across the membrane which is generated by electron transport complexes of the respiratory chain. ATP synthase complex consist of a soluble F(1) head domain - the catalytic core - and a membrane F(1) domain - the membrane proton channel. These two domains are linked by a central stalk rotating inside the F(1) region and a stationary peripheral stalk. During catalysis, ATP synthesis in the catalytic domain of F(1) is coupled via a rotary mechanism of the central stalk subunits to proton translocation. In vivo, can only synthesize ATP although its ATP hydrolase activity can be activated artificially in vitro. Part of the complex F(0) domain. Part of the complex F(0) domain and the peripheric stalk, which acts as a stator to hold the catalytic alpha(3)beta(3) subcomplex and subunit a/ATP6 static relative to the rotary elements. This chain is ATP synthase peripheral stalk subunit b, mitochondrial, found in Bos taurus (Bovine).